The following is a 315-amino-acid chain: Jacalin-related lectin 10 (315 aa).

Positions 1–23 (MVIIYIFLFLSSAIIDSTGLAKA) are cleaved as a signal peptide. Jacalin-type lectin domains are found at residues 24–165 (QKLD…YLTT) and 168–312 (PTKS…YFSP).

The protein belongs to the jacalin lectin family.

The polypeptide is Jacalin-related lectin 10 (JAL10) (Arabidopsis thaliana (Mouse-ear cress)).